We begin with the raw amino-acid sequence, 299 residues long: MTEFRSGFVCLVGRPNTGKSTLTNALVGTKVAITSMRPQTTRHTIRGIVHREDFQIILVDTPGLHRPRTLLGKRLNDLVRDTYAEVDVIGLCIPADEAIGPGDRWIVEQIRATAPKTTLVAIVTKIDKVPKDRVAAQLVAVSELVGDSAEIVPVSAVTGAQVDIVIDVLAAALPPGPAYYPDGELTDEPEEVLMAELIREAALEGVRDELPHSLAVVIDEVNPREDRDDLIDVHALLYVERDSQKGIIIGKGGARLREVGTAARAQIEKLLGTKVYLDLRVKVAKNWQSDPKQLGRLGF.

One can recognise an Era-type G domain in the interval 5-175; sequence RSGFVCLVGR…IDVLAAALPP (171 aa). The segment at 13–20 is G1; the sequence is GRPNTGKS. Residue 13-20 participates in GTP binding; it reads GRPNTGKS. A G2 region spans residues 39–43; it reads QTTRH. Positions 60-63 are G3; sequence DTPG. Residues 60-64 and 124-127 contribute to the GTP site; these read DTPGL and TKID. Positions 124 to 127 are G4; the sequence is TKID. The interval 154–156 is G5; the sequence is VSA. Positions 206-285 constitute a KH type-2 domain; that stretch reads VRDELPHSLA…YLDLRVKVAK (80 aa).

The protein belongs to the TRAFAC class TrmE-Era-EngA-EngB-Septin-like GTPase superfamily. Era GTPase family. As to quaternary structure, monomer.

It localises to the cell envelope. The protein localises to the secreted. Its subcellular location is the cell wall. In terms of biological role, exhibits GTPase activity. Binds RNA but is probably not involved in ribosome assembly in mycobacteria. This is GTPase Era from Mycolicibacterium paratuberculosis (strain ATCC BAA-968 / K-10) (Mycobacterium paratuberculosis).